The sequence spans 271 residues: Regulatory protein RecX (271 aa).

It belongs to the RecX family.

It is found in the cytoplasm. In terms of biological role, modulates RecA activity. This chain is Regulatory protein RecX, found in Lactobacillus delbrueckii subsp. bulgaricus (strain ATCC BAA-365 / Lb-18).